Reading from the N-terminus, the 274-residue chain is F-actin-capping protein subunit alpha (274 aa).

This sequence belongs to the F-actin-capping protein alpha subunit family. In terms of assembly, heterodimer of an alpha and a beta subunit.

Its subcellular location is the cytoplasm. Functionally, F-actin-capping proteins bind in a Ca(2+)-independent manner to the fast growing ends of actin filaments (barbed end) thereby blocking the exchange of subunits at these ends. Unlike other capping proteins (such as gelsolin and severin), these proteins do not sever actin filaments. The chain is F-actin-capping protein subunit alpha from Chaetomium thermophilum (strain DSM 1495 / CBS 144.50 / IMI 039719) (Thermochaetoides thermophila).